A 204-amino-acid polypeptide reads, in one-letter code: MHLMLVLLGLAALLGTSQSQTGCYGVVNRIDTTGASCETAKPEKLNYCGVAASRMIAERDLRSMDRYKTLIKKVGQKLCVDPAVIAGIISRESHAGKALKNGWGDNGNGFGLMQVDKRSHTPVGEWNGERHLTQGTEILISMIKKIQKKFPRWTKEQQLKGGISAYNAGSGNVRSYERMDIGTTHNDYANDVVARAQYYKQHGY.

The first 19 residues, 1–19 (MHLMLVLLGLAALLGTSQS), serve as a signal peptide directing secretion. Cystine bridges form between Cys-23–Cys-79 and Cys-37–Cys-48. Active-site residues include Glu-92 and Asp-105.

Belongs to the glycosyl hydrolase 23 family.

The protein localises to the secreted. The catalysed reaction is Hydrolysis of (1-&gt;4)-beta-linkages between N-acetylmuramic acid and N-acetyl-D-glucosamine residues in a peptidoglycan and between N-acetyl-D-glucosamine residues in chitodextrins.. Has bacteriolytic activity against M.luteus. This is Lysozyme G from Dromaius novaehollandiae (Emu).